Reading from the N-terminus, the 278-residue chain is Orotidine 5'-phosphate decarboxylase (278 aa).

The active-site Proton donor is the Lys-95.

The protein belongs to the OMP decarboxylase family. Type 2 subfamily.

The catalysed reaction is orotidine 5'-phosphate + H(+) = UMP + CO2. It participates in pyrimidine metabolism; UMP biosynthesis via de novo pathway; UMP from orotate: step 2/2. This chain is Orotidine 5'-phosphate decarboxylase, found in Corynebacterium glutamicum (strain R).